A 291-amino-acid chain; its full sequence is Pyridoxal 5'-phosphate synthase subunit PdxS (291 aa).

Residue Asp23 participates in D-ribose 5-phosphate binding. Catalysis depends on Lys80, which acts as the Schiff-base intermediate with D-ribose 5-phosphate. D-ribose 5-phosphate is bound at residue Gly152. Arg164 provides a ligand contact to D-glyceraldehyde 3-phosphate. Residues Gly213 and 234 to 235 (GS) contribute to the D-ribose 5-phosphate site.

It belongs to the PdxS/SNZ family. In terms of assembly, in the presence of PdxT, forms a dodecamer of heterodimers.

The catalysed reaction is aldehydo-D-ribose 5-phosphate + D-glyceraldehyde 3-phosphate + L-glutamine = pyridoxal 5'-phosphate + L-glutamate + phosphate + 3 H2O + H(+). It participates in cofactor biosynthesis; pyridoxal 5'-phosphate biosynthesis. Catalyzes the formation of pyridoxal 5'-phosphate from ribose 5-phosphate (RBP), glyceraldehyde 3-phosphate (G3P) and ammonia. The ammonia is provided by the PdxT subunit. Can also use ribulose 5-phosphate and dihydroxyacetone phosphate as substrates, resulting from enzyme-catalyzed isomerization of RBP and G3P, respectively. The polypeptide is Pyridoxal 5'-phosphate synthase subunit PdxS (Haemophilus influenzae (strain PittGG)).